Reading from the N-terminus, the 327-residue chain is Vacuolar protein sorting-associated protein 26A (327 aa).

Residues 306-327 (RTNFHQRFESPESQASAEQPEM) form a disordered region. Residue Ser315 is modified to Phosphoserine. The span at 316-327 (PESQASAEQPEM) shows a compositional bias: polar residues.

The protein belongs to the VPS26 family. Component of the heterotrimeric retromer cargo-selective complex (CSC), also described as vacuolar protein sorting subcomplex (VPS), formed by VPS26 (VPS26A or VPS26B), VPS29 and VPS35. The CSC has a highly elongated structure with VPS26 and VPS29 binding independently at opposite distal ends of VPS35 as central platform. The CSC is believed to associate with variable sorting nexins to form functionally distinct retromer complex variants. The originally described retromer complex (also called SNX-BAR retromer) is a pentamer containing the CSC and a heterodimeric membrane-deforming subcomplex formed between SNX1 or SNX2 and SNX5 or SNX6 (also called SNX-BAR subcomplex); the respective CSC and SNX-BAR subcomplexes associate with low affinity. The CSC associates with SNX3 to form a SNX3-retromer complex. The CSC associates with SNX27, the WASH complex and the SNX-BAR subcomplex to form the SNX27-retromer complex. Interacts with VPS29, VPS35, SNX27, SNX1, SNX2, SNX5, SNX6, SNX3, RAB7A, ECPAS, EHD1, WASHC5, SORL1.

It is found in the cytoplasm. The protein resides in the endosome membrane. The protein localises to the early endosome. Acts as a component of the retromer cargo-selective complex (CSC). The CSC is believed to be the core functional component of retromer or respective retromer complex variants acting to prevent missorting of selected transmembrane cargo proteins into the lysosomal degradation pathway. The recruitment of the CSC to the endosomal membrane involves RAB7A and SNX3. The SNX-BAR retromer mediates retrograde transport of cargo proteins from endosomes to the trans-Golgi network (TGN) and is involved in endosome-to-plasma membrane transport for cargo protein recycling. The SNX3-retromer mediates the retrograde endosome-to-TGN transport of WLS distinct from the SNX-BAR retromer pathway. The SNX27-retromer is believed to be involved in endosome-to-plasma membrane trafficking and recycling of a broad spectrum of cargo proteins. The CSC complex seems to act as recruitment hub for other proteins, such as the WASH complex and TBC1D5. Required for retrograde transport of lysosomal enzyme receptor IGF2R. Required to regulate transcytosis of the polymeric immunoglobulin receptor (pIgR-pIgA). Required for the endosomal localization of WASHC2 (indicative for the WASH complex). Required for the endosomal localization of TBC1D5. Mediates retromer cargo recognition of SORL1 and is involved in trafficking of SORL1 implicated in sorting and processing of APP. Involved in retromer-independent lysosomal sorting of F2R. Involved in recycling of ADRB2. Acts redundantly with VSP26B in SNX-27 mediated endocytic recycling of SLC2A1/GLUT1. Enhances the affinity of SNX27 for PDZ-binding motifs in cargo proteins. This chain is Vacuolar protein sorting-associated protein 26A (Vps26a), found in Rattus norvegicus (Rat).